The chain runs to 377 residues: Alanine racemase (377 aa).

The active-site Proton acceptor; specific for D-alanine is the lysine 33. N6-(pyridoxal phosphate)lysine is present on lysine 33. Substrate is bound at residue arginine 134. Tyrosine 267 acts as the Proton acceptor; specific for L-alanine in catalysis. Methionine 315 is a substrate binding site.

This sequence belongs to the alanine racemase family. Requires pyridoxal 5'-phosphate as cofactor.

The enzyme catalyses L-alanine = D-alanine. Its pathway is amino-acid biosynthesis; D-alanine biosynthesis; D-alanine from L-alanine: step 1/1. Catalyzes the interconversion of L-alanine and D-alanine. May also act on other amino acids. In Treponema pallidum subsp. pallidum (strain SS14), this protein is Alanine racemase (alr).